The primary structure comprises 145 residues: UPF0260 protein VS_0923 (145 aa).

The protein belongs to the UPF0260 family.

The protein is UPF0260 protein VS_0923 of Vibrio atlanticus (strain LGP32) (Vibrio splendidus (strain Mel32)).